A 146-amino-acid chain; its full sequence is Cyanate hydratase (146 aa).

Catalysis depends on residues R87, E90, and S113.

Belongs to the cyanase family.

The enzyme catalyses cyanate + hydrogencarbonate + 3 H(+) = NH4(+) + 2 CO2. Its function is as follows. Catalyzes the reaction of cyanate with bicarbonate to produce ammonia and carbon dioxide. This is Cyanate hydratase from Synechococcus elongatus (strain ATCC 33912 / PCC 7942 / FACHB-805) (Anacystis nidulans R2).